Here is a 27-residue protein sequence, read N- to C-terminus: uncharacterized protein (27 aa).

Residues Ile6–Leu26 form a helical membrane-spanning segment.

Belongs to the DinQ family.

The protein localises to the cell inner membrane. This is an uncharacterized protein from Escherichia coli (strain K12).